The chain runs to 376 residues: Pyruvate dehydrogenase E1 component subunit beta-2, mitochondrial (376 aa).

The transit peptide at 1–36 directs the protein to the mitochondrion; it reads MLGAARRQLGSGPMLGQVLRRLRPATAAAADAARAY. A thiamine diphosphate-binding site is contributed by Glu-99. 4 residues coordinate K(+): Ile-152, Ala-200, Ile-201, and Asp-203.

Tetramer of 2 alpha and 2 beta subunits. It depends on thiamine diphosphate as a cofactor.

It localises to the mitochondrion matrix. The catalysed reaction is N(6)-[(R)-lipoyl]-L-lysyl-[protein] + pyruvate + H(+) = N(6)-[(R)-S(8)-acetyldihydrolipoyl]-L-lysyl-[protein] + CO2. In terms of biological role, the pyruvate dehydrogenase complex catalyzes the overall conversion of pyruvate to acetyl-CoA and CO(2). It contains multiple copies of three enzymatic components: pyruvate dehydrogenase (E1), dihydrolipoamide acetyltransferase (E2) and lipoamide dehydrogenase (E3). This chain is Pyruvate dehydrogenase E1 component subunit beta-2, mitochondrial, found in Oryza sativa subsp. japonica (Rice).